A 4963-amino-acid polypeptide reads, in one-letter code: Kettin homolog (4963 aa).

Ig-like domains lie at 18–105, 133–220, and 303–392; these read PTFI…TCIL, PSAP…EAIS, and PIIR…ARIE. Disordered regions lie at residues 396-420, 466-501, 557-578, 598-622, and 652-696; these read LSVP…QQQQ, RRQL…EEER, IRPH…RQEV, QLYQ…QQRF, and TNGG…GHEH. Basic and acidic residues-rich tracts occupy residues 399 to 417, 466 to 475, and 484 to 501; these read PDER…RDRQ, RRQLEHEKRL, and FERE…EEER. Residues 401 to 517 adopt a coiled-coil conformation; the sequence is ERRKENQLRE…KHLRQQQQTQ (117 aa). The span at 557–576 shows a compositional bias: low complexity; that stretch reads IRPHQQQQQHYQQQQQSPRQ. A compositionally biased stretch (low complexity) spans 658–685; sequence AANGSAKTANGSANGSANGSAVHAANGG. Ig-like domains follow at residues 706-796, 806-893, 937-1027, 1065-1155, 1199-1281, 1462-1554, 1594-1687, 1728-1819, 1992-2085, 2126-2217, 2258-2350, 2391-2481, 2522-2613, 2654-2745, 2787-2878, 2919-3010, 3051-3141, 3182-3273, 3314-3407, and 3448-3539; these read PQFL…FSLN, PEFT…GRVV, PKFE…ANIA, PNFH…ATII, FHCE…AELT, PKFL…ITVT, PPTF…ATIR, PAFV…VDIN, PPVF…IFLE, PTFT…CTVK, PKFV…ANFT, PQFI…AQLT, PKFV…GQLS, PSFV…ANVG, PQWV…ATVT, PNFL…ASIR, PAIT…ATLK, PRFI…ATIE, PAIV…FEVS, and PVFI…TKLT. A disulfide bond links Cys827 and Cys877. Cys1201 and Cys1265 are disulfide-bonded. Residues Cys1618 and Cys1671 are joined by a disulfide bond. Cystine bridges form between Cys2016/Cys2069 and Cys2148/Cys2201. A compositionally biased stretch (basic and acidic residues) spans 3567–3583; sequence EAPRPAREDAPDADHGP. Residues 3567 to 3590 form a disordered region; it reads EAPRPAREDAPDADHGPPKFTSAL. Ig-like domains follow at residues 3584-3677, 3720-3811, 3821-3913, 3962-4052, and 4098-4185; these read PKFT…LKVV, PSFS…GKIA, PQVV…TKIT, PEFR…AKLA, and PQFT…ATLD. 2 disulfide bridges follow: Cys3606–Cys3659 and Cys3742–Cys3795. Residues 4193 to 4963 are required for F-actin binding; sequence RQTKLRPANF…TSQAKLTLSR (771 aa). The span at 4319-4329 shows a compositional bias: basic and acidic residues; that stretch reads DQQEVGWERPD. The segment at 4319-4357 is disordered; the sequence is DQQEVGWERPDWAGQDGTSKLPGADEGRFKKLPTPAPEL. Ig-like domains lie at 4546–4634, 4645–4733, 4752–4842, and 4872–4960; these read PTIS…ANLT, PDFS…ARLN, PRFT…LVLT, and PHFI…AKLT.

In terms of assembly, interacts (via Ig-like domains) with F-actin. In terms of tissue distribution, expressed in the pharyngeal, body wall, and anal depressor muscles. Expression in these muscles is higher in hermaphrodites than in males. Expressed in the vulva and the myoepithelial sheath of the proximal ovary. Expressed in the proximal gonad of males. Not expressed in the dense bodies of the obliquely striated body wall muscle.

Its subcellular location is the cytoplasm. It is found in the myofibril. The protein localises to the sarcomere. It localises to the cytoskeleton. Positively regulates actin filament organization and provides mechanical stability to the myofibrils during body wall muscle contraction. Required for the organization of sarcomeric actin filaments and myosin protein myo-3 in striated body wall muscle cells. Not required for assembly of dense bodies, which are a type of integrin-based adhesion structure that link the plasma membrane to thin filaments of myofibrils, in body wall muscle. Not required for the atn-1 protein to localize to the dense bodies. This Caenorhabditis elegans protein is Kettin homolog.